The primary structure comprises 738 residues: DNA repair and recombination protein RAD54-like (738 aa).

The tract at residues 1 to 31 (MRRSLAPSQVAKRKQGPDSDDEEDWEPDMEP) is disordered. The span at 18-29 (DSDDEEDWEPDM) shows a compositional bias: acidic residues. One can recognise a Helicase ATP-binding domain in the interval 164-339 (GRRIENSYGC…FSLVHFVNSG (176 aa)). 177-184 (DEMGLGKT) contacts ATP. Residues 290-293 (DEGH) carry the DEAH box motif. The Helicase C-terminal domain maps to 493–647 (LVLDYILAMT…CVVDEEQDVE (155 aa)). Phosphoserine occurs at positions 566 and 567.

As to quaternary structure, homohexamer. Interacts with RAD51. In terms of processing, phosphorylated. Phosphorylations at Ser-566 and Ser-567 allow efficient removal of RAD51 filaments from DNA.

It catalyses the reaction ATP + H2O = ADP + phosphate + H(+). Plays an essential role in homologous recombination (HR) which is a major pathway for repairing DNA double-strand breaks (DSBs), single-stranded DNA (ssDNA) gaps, and stalled or collapsed replication forks. Acts as a molecular motor during the homology search and guides RAD51 ssDNA along a donor dsDNA thereby changing the homology search from the diffusion-based mechanism to a motor-guided mechanism. Also plays an essential role in RAD51-mediated synaptic complex formation which consists of three strands encased in a protein filament formed once homology is recognized. Once DNA strand exchange occured, dissociates RAD51 from nucleoprotein filaments formed on dsDNA. In Danio rerio (Zebrafish), this protein is DNA repair and recombination protein RAD54-like (rad54l).